The chain runs to 298 residues: Olfactory receptor 52Z1P (298 aa).

The Extracellular portion of the chain corresponds to 1–14; it reads MGIPGLEGLHTWIS. Residues 15–35 traverse the membrane as a helical segment; the sequence is IPFSFMYIVAVAGNIFLIFLI. At 36–43 the chain is on the cytoplasmic side; sequence MTERSLHE. The helical transmembrane segment at 44–64 threads the bilayer; that stretch reads PMYLFLSMLASADFLLATAAA. The Extracellular segment spans residues 65-85; it reads PKVLAILWFHSMDISFGSCVS. Cys-83 and Cys-164 form a disulfide bridge. A helical transmembrane segment spans residues 86 to 106; sequence QMFFIHFIFVAESAILLAMAF. Topologically, residues 107 to 128 are cytoplasmic; it reads DRYVAICYPLRYTILTSSAVRK. A helical membrane pass occupies residues 129 to 149; it reads IGIAAVVRSFFICCPFIFLVY. Residues 150–178 lie on the Extracellular side of the membrane; sequence RLTYCGRNIIPHSYCEHIARLACGNINVN. A helical transmembrane segment spans residues 179 to 199; that stretch reads IIYGLTVALLSTGLDIVLIII. Residues 200 to 223 are Cytoplasmic-facing; it reads SYTMILHSVFQISSWAARFKALST. The helical transmembrane segment at 224-244 threads the bilayer; sequence CGSHICVIFMFYTPAFFSFLA. Residues 245 to 257 are Extracellular-facing; it reads HRFGGKTIPHHIH. A helical membrane pass occupies residues 258-278; sequence ILVGSLYVLVPPMLNPIIYGV. At 279 to 298 the chain is on the cytoplasmic side; sequence KTKQIKDRVILLFSPISVCC.

It belongs to the G-protein coupled receptor 1 family.

It localises to the cell membrane. In terms of biological role, odorant receptor. The polypeptide is Olfactory receptor 52Z1P (Homo sapiens (Human)).